A 417-amino-acid polypeptide reads, in one-letter code: Exodeoxyribonuclease 7 large subunit (417 aa).

Belongs to the XseA family. Heterooligomer composed of large and small subunits.

The protein resides in the cytoplasm. The enzyme catalyses Exonucleolytic cleavage in either 5'- to 3'- or 3'- to 5'-direction to yield nucleoside 5'-phosphates.. Its function is as follows. Bidirectionally degrades single-stranded DNA into large acid-insoluble oligonucleotides, which are then degraded further into small acid-soluble oligonucleotides. This Corynebacterium glutamicum (strain ATCC 13032 / DSM 20300 / JCM 1318 / BCRC 11384 / CCUG 27702 / LMG 3730 / NBRC 12168 / NCIMB 10025 / NRRL B-2784 / 534) protein is Exodeoxyribonuclease 7 large subunit.